The sequence spans 333 residues: Transmembrane protein I329L (333 aa).

Residues 1 to 31 (MLRVFIFFVFLGSGLTGRIKPQITCKYFISE) form the signal peptide. N-linked (GlcNAc...) asparagine; by host glycosylation is found at Asn-32, Asn-39, Asn-44, Asn-76, Asn-82, and Asn-101. Residues 32 to 239 (NNTWYKYNVT…NTERYKSCYP (208 aa)) are Extracellular-facing. Residues 112–133 (ELKFLDLRYNDLQVIEYNILRK) form an LRR repeat. N-linked (GlcNAc...) asparagine; by host glycans are attached at residues Asn-181, Asn-185, and Asn-219. An intrachain disulfide couples Cys-195 to Cys-237. The helical transmembrane segment at 240 to 260 (LVFISILCSCISFLFLFICLL) threads the bilayer. Residues 261-333 (RSICKKYSCT…EKKVSCSRRK (73 aa)) lie on the Cytoplasmic side of the membrane.

This sequence belongs to the asfivirus I329L family. Post-translationally, highly glycosylated.

Its subcellular location is the host endoplasmic reticulum membrane. It localises to the host Golgi apparatus membrane. Viral TLR3 homolog that probably prevents TLR3 dimerization and subsequent induction of IFN. Inhibits dsRNA-stimulated activation of NF-kB and IRF3. This is Transmembrane protein I329L from Ornithodoros (relapsing fever ticks).